The chain runs to 178 residues: Cytochrome b6-f complex iron-sulfur subunit (178 aa).

The chain crosses the membrane as a helical span at residues 20–42 (LLTFGSVTGVALGALYPVVNYFI). Residues 71 to 161 (THPAGDRSLV…VSVENDNVFV (91 aa)) form the Rieske domain. Residues Cys107, His109, Cys125, and His128 each contribute to the [2Fe-2S] cluster site. An intrachain disulfide couples Cys112 to Cys127.

This sequence belongs to the Rieske iron-sulfur protein family. As to quaternary structure, the 4 large subunits of the cytochrome b6-f complex are cytochrome b6, subunit IV (17 kDa polypeptide, PetD), cytochrome f and the Rieske protein, while the 4 small subunits are PetG, PetL, PetM and PetN. The complex functions as a dimer. Requires [2Fe-2S] cluster as cofactor.

It localises to the cellular thylakoid membrane. It catalyses the reaction 2 oxidized [plastocyanin] + a plastoquinol + 2 H(+)(in) = 2 reduced [plastocyanin] + a plastoquinone + 4 H(+)(out). Its function is as follows. Component of the cytochrome b6-f complex, which mediates electron transfer between photosystem II (PSII) and photosystem I (PSI), cyclic electron flow around PSI, and state transitions. In Synechococcus sp. (strain WH7803), this protein is Cytochrome b6-f complex iron-sulfur subunit.